The chain runs to 127 residues: S1-like domain-containing protein C146.08c (127 aa).

One can recognise an S1-like domain in the interval Ser-10 to Val-86. The segment at Glu-107–Asp-127 is disordered. Positions Asp-113–Asp-127 are enriched in acidic residues. Position 124 is a phosphotyrosine (Tyr-124). A Phosphoserine modification is found at Ser-126.

This sequence belongs to the EIF1AD family.

The protein resides in the cytoplasm. The protein localises to the nucleus. The protein is S1-like domain-containing protein C146.08c of Schizosaccharomyces pombe (strain 972 / ATCC 24843) (Fission yeast).